The chain runs to 391 residues: SNIFKGPTVGSSVVAMSARLASTEATFQAKPFKLHKLDSGPDVNMHVTKEDALRYYTQMQTIRRMETAAGNLYKEKKVRGFCHLYSGQEACAVGMKAAMEPGDAAITAYRCHGWTYLSGSPVAKVLCELTGRITGNVYGKGGSMHMYGENFYGGNGIVGAQQPLGTGIAFAMKYKKQKNVCITLFGDGATNQGQLYESMNMAKLWELPVLYVCENNGYGMGTSAARSSASTDYYTRGDYVPGFWVDGMDVLAVRQAIRWGKEWCNAGKGPLMIEMATYRYGGHSMSDPGTSYRTREEIQEVRKTRDPITGFKDKIVTAGLVTEDELKEVDKEIRKEVDAAVKQAHTDKEAPVEMLLTDIYYNTPAQYVRCTTEDVLQQYVTSEEAFKALSK.

Residues 1-17 (SNIFKGPTVGSSVVAMS) constitute a mitochondrion transit peptide. Positions 83, 109, 110, 148, 156, 158, 187, 188, 189, 216, and 218 each coordinate pyruvate. Y109 and R110 together coordinate thiamine diphosphate. The thiamine diphosphate site is built by G156, V158, D187, G188, A189, and N216. D187 lines the Mg(2+) pocket. 2 residues coordinate Mg(2+): N216 and Y218. Residue H283 coordinates thiamine diphosphate. Phosphoserine occurs at positions 284 and 291.

As to quaternary structure, heterotetramer of two PDHA2 and two PDHB subunits. The heterotetramer interacts with DLAT, and is part of the multimeric pyruvate dehydrogenase complex that contains multiple copies of pyruvate dehydrogenase (E1), dihydrolipoamide acetyltransferase (DLAT, E2) and lipoamide dehydrogenase (DLD, E3). The cofactor is thiamine diphosphate. Mg(2+) is required as a cofactor.

The protein resides in the mitochondrion matrix. It carries out the reaction N(6)-[(R)-lipoyl]-L-lysyl-[protein] + pyruvate + H(+) = N(6)-[(R)-S(8)-acetyldihydrolipoyl]-L-lysyl-[protein] + CO2. Pyruvate dehydrogenase activity is inhibited by phosphorylation of PDHA2; it is reactivated by dephosphorylation. Functionally, the pyruvate dehydrogenase complex catalyzes the overall conversion of pyruvate to acetyl-CoA and CO(2), and thereby links the glycolytic pathway to the tricarboxylic cycle. This is Pyruvate dehydrogenase E1 component subunit alpha type II, mitochondrial from Ascaris suum (Pig roundworm).